The chain runs to 450 residues: tRNA-2-methylthio-N(6)-dimethylallyladenosine synthase (450 aa).

The MTTase N-terminal domain occupies 14 to 132; that stretch reads GEFFIETWGC…FPNYLNEVKK (119 aa). Residues C23, C59, C93, C169, C173, and C176 each coordinate [4Fe-4S] cluster. In terms of domain architecture, Radical SAM core spans 155-385; the sequence is RKNSMKAFVT…VEVVNEISAK (231 aa). The region spanning 388-450 is the TRAM domain; the sequence is KAYEGKIEEV…NSFSLTGEEI (63 aa).

The protein belongs to the methylthiotransferase family. MiaB subfamily. Monomer. [4Fe-4S] cluster serves as cofactor.

The protein resides in the cytoplasm. The catalysed reaction is N(6)-dimethylallyladenosine(37) in tRNA + (sulfur carrier)-SH + AH2 + 2 S-adenosyl-L-methionine = 2-methylsulfanyl-N(6)-dimethylallyladenosine(37) in tRNA + (sulfur carrier)-H + 5'-deoxyadenosine + L-methionine + A + S-adenosyl-L-homocysteine + 2 H(+). Its function is as follows. Catalyzes the methylthiolation of N6-(dimethylallyl)adenosine (i(6)A), leading to the formation of 2-methylthio-N6-(dimethylallyl)adenosine (ms(2)i(6)A) at position 37 in tRNAs that read codons beginning with uridine. The chain is tRNA-2-methylthio-N(6)-dimethylallyladenosine synthase from Clostridium botulinum (strain Loch Maree / Type A3).